A 27-amino-acid chain; its full sequence is Flagellar filament 31.5 kDa core protein (27 aa).

The protein belongs to the bacterial flagellin family. The flagellum consists of an outer layer composed of repeating units of FlaA around a core that contains one or all of five antigenically related polypeptides.

It localises to the periplasmic flagellum. The protein localises to the periplasm. Functionally, component of the core of the flagella. The sequence is that of Flagellar filament 31.5 kDa core protein from Spirochaeta aurantia.